We begin with the raw amino-acid sequence, 475 residues long: Sulfate adenylyltransferase subunit 1 (475 aa).

The tr-type G domain occupies 25 to 239; the sequence is KSLLRFLTCG…EVLETVEIQR (215 aa). The interval 34–41 is G1; that stretch reads GSVDDGKS. Position 34 to 41 (34 to 41) interacts with GTP; that stretch reads GSVDDGKS. Positions 92-96 are G2; the sequence is GITID. The tract at residues 113–116 is G3; the sequence is DTPG. GTP contacts are provided by residues 113–117 and 168–171; these read DTPGH and NKMD. Residues 168-171 are G4; sequence NKMD. A G5 region spans residues 206–208; sequence SAL.

Belongs to the TRAFAC class translation factor GTPase superfamily. Classic translation factor GTPase family. CysN/NodQ subfamily. As to quaternary structure, heterodimer composed of CysD, the smaller subunit, and CysN.

The enzyme catalyses sulfate + ATP + H(+) = adenosine 5'-phosphosulfate + diphosphate. It functions in the pathway sulfur metabolism; hydrogen sulfide biosynthesis; sulfite from sulfate: step 1/3. With CysD forms the ATP sulfurylase (ATPS) that catalyzes the adenylation of sulfate producing adenosine 5'-phosphosulfate (APS) and diphosphate, the first enzymatic step in sulfur assimilation pathway. APS synthesis involves the formation of a high-energy phosphoric-sulfuric acid anhydride bond driven by GTP hydrolysis by CysN coupled to ATP hydrolysis by CysD. This chain is Sulfate adenylyltransferase subunit 1, found in Escherichia coli O139:H28 (strain E24377A / ETEC).